We begin with the raw amino-acid sequence, 580 residues long: MDGPDQIGPDVRPRRTFGDRVRRAARAFTTRDGLIGDYDYGFLFTPRLPFVKQKRRAAPFFGLEDKIPLVLALLLGLQHALAMLAGVITPPILLAGSSGANFGADESQYLVSTSLIVSGLLSAVQMFRLHVYKTRYYVGTGLVSVVGTSFATITVATGTFNQMYSTGYCPVDGSGNRLPCPKGYGALLATSCLCSLLEIGLSFMSSRLLKALFPPIVTGPTVFLIGASLIGNAMKDWAGGSGTCSSNPGNGALCPSADAPHPLPWGSAEFIGLGFLVFATIILCERFGSPIMKSCAVIVGLLVGCIVAAACGYFDRSGIDAAPVASFIWVKTFPLTIYAPLILPLLAVYMVIMMESIGDITATCDVSRLQVEGATFDSRIQGGVLGNGITCLLAGLCTITPMSVFAQNNGVIALTRCANRKAGYCCCFFLVVMGIFAKFAAALVAIPSSVLGGMTTFLFSSVAISGVRIMCSVDWTRRNRFILTASFAVGMAATLVPDWFSYFFTYSGDNHALEGLLQAVELVMANGFAVTGFLGLLLNLILPEDMEEDVVESEEDYEATTVVGMQGGSEPGSSGQNVKA.

Helical transmembrane passes span 68–88 (PLVL…AGVI), 107–127 (SQYL…VQMF), 136–156 (YYVG…ITVA), 184–204 (YGAL…LSFM), 211–231 (ALFP…SLIG), 263–283 (LPWG…TIIL), 294–314 (SCAV…CGYF), 385–405 (LGNG…MSVF), 426–446 (CCFF…LVAI), 447–467 (PSSV…ISGV), 481–501 (FILT…DWFS), and 522–542 (LVMA…NLIL).

It belongs to the nucleobase:cation symporter-2 (NCS2) (TC 2.A.40) family.

The protein localises to the membrane. Its function is as follows. Able to transport with low efficiency all natural purines as well as purine analogs. The protein is Purine permease (uapC) of Emericella nidulans (strain FGSC A4 / ATCC 38163 / CBS 112.46 / NRRL 194 / M139) (Aspergillus nidulans).